A 2259-amino-acid polypeptide reads, in one-letter code: Protein Ycf2 (2259 aa).

ATP is bound at residue 1556 to 1563 (GSQETGRS).

Belongs to the Ycf2 family.

The protein localises to the plastid. It is found in the chloroplast stroma. Functionally, probable ATPase of unknown function. Its presence in a non-photosynthetic plant (Epifagus virginiana) and experiments in tobacco indicate that it has an essential function which is probably not related to photosynthesis. This is Protein Ycf2 from Physcomitrium patens (Spreading-leaved earth moss).